The chain runs to 185 residues: Threonylcarbamoyl-AMP synthase (185 aa).

Positions 1 to 185 (MKNFEQVLKA…AKTSQILRQG (185 aa)) constitute a YrdC-like domain. Residues 163-185 (ETSGRNKPSEIRDAKTSQILRQG) are disordered. Over residues 164-177 (TSGRNKPSEIRDAK) the composition is skewed to basic and acidic residues.

Belongs to the SUA5 family. TsaC subfamily.

It is found in the cytoplasm. It catalyses the reaction L-threonine + hydrogencarbonate + ATP = L-threonylcarbamoyladenylate + diphosphate + H2O. Its function is as follows. Required for the formation of a threonylcarbamoyl group on adenosine at position 37 (t(6)A37) in tRNAs that read codons beginning with adenine. Catalyzes the conversion of L-threonine, HCO(3)(-)/CO(2) and ATP to give threonylcarbamoyl-AMP (TC-AMP) as the acyladenylate intermediate, with the release of diphosphate. This chain is Threonylcarbamoyl-AMP synthase, found in Vibrio campbellii (strain ATCC BAA-1116).